A 513-amino-acid polypeptide reads, in one-letter code: ATP synthase subunit alpha (513 aa).

Residue 169-176 (GDRKTGKS) coordinates ATP.

The protein belongs to the ATPase alpha/beta chains family. In terms of assembly, F-type ATPases have 2 components, CF(1) - the catalytic core - and CF(0) - the membrane proton channel. CF(1) has five subunits: alpha(3), beta(3), gamma(1), delta(1), epsilon(1). CF(0) has three main subunits: a(1), b(2) and c(9-12). The alpha and beta chains form an alternating ring which encloses part of the gamma chain. CF(1) is attached to CF(0) by a central stalk formed by the gamma and epsilon chains, while a peripheral stalk is formed by the delta and b chains.

Its subcellular location is the cell membrane. The catalysed reaction is ATP + H2O + 4 H(+)(in) = ADP + phosphate + 5 H(+)(out). Functionally, produces ATP from ADP in the presence of a proton gradient across the membrane. The alpha chain is a regulatory subunit. In Levilactobacillus brevis (strain ATCC 367 / BCRC 12310 / CIP 105137 / JCM 1170 / LMG 11437 / NCIMB 947 / NCTC 947) (Lactobacillus brevis), this protein is ATP synthase subunit alpha.